The primary structure comprises 485 residues: Membrane-bound lytic murein transglycosylase F (485 aa).

An N-terminal signal peptide occupies residues 1-29; that stretch reads MFAHTALRQRCAKWLFATGLFLLLGACVE. The interval 30 to 267 is non-LT domain; it reads KPSTLERVKE…RLKDRYYGHV (238 aa). The tract at residues 268–485 is LT domain; that stretch reads DVLGYVGAYT…DKPAEQSPPM (218 aa). The active site involves E314. Residues 465-485 are disordered; sequence EGNLHVPGVNKDKPAEQSPPM.

The protein in the N-terminal section; belongs to the bacterial solute-binding protein 3 family. This sequence in the C-terminal section; belongs to the transglycosylase Slt family.

The protein resides in the cell outer membrane. It carries out the reaction Exolytic cleavage of the (1-&gt;4)-beta-glycosidic linkage between N-acetylmuramic acid (MurNAc) and N-acetylglucosamine (GlcNAc) residues in peptidoglycan, from either the reducing or the non-reducing ends of the peptidoglycan chains, with concomitant formation of a 1,6-anhydrobond in the MurNAc residue.. In terms of biological role, murein-degrading enzyme that degrades murein glycan strands and insoluble, high-molecular weight murein sacculi, with the concomitant formation of a 1,6-anhydromuramoyl product. Lytic transglycosylases (LTs) play an integral role in the metabolism of the peptidoglycan (PG) sacculus. Their lytic action creates space within the PG sacculus to allow for its expansion as well as for the insertion of various structures such as secretion systems and flagella. In Pseudomonas putida (strain W619), this protein is Membrane-bound lytic murein transglycosylase F.